Reading from the N-terminus, the 506-residue chain is Histidine--tRNA ligase, mitochondrial (506 aa).

A mitochondrion-targeting transit peptide spans 1–33 (MHLLGLLPRRAWASLLSQLLRPPWASCTGAVRC). Ser67 is modified (phosphoserine). L-histidine-binding positions include 131-133 (DLT), Arg158, Gln174, Asp178, Arg327, and 331-332 (YY). Lys444 carries the N6-acetyllysine modification.

The protein belongs to the class-II aminoacyl-tRNA synthetase family. As to quaternary structure, homodimer.

The protein localises to the mitochondrion. The enzyme catalyses tRNA(His) + L-histidine + ATP = L-histidyl-tRNA(His) + AMP + diphosphate + H(+). Mitochondrial aminoacyl-tRNA synthetase that catalyzes the ATP-dependent ligation of histidine to the 3'-end of its cognate tRNA, via the formation of an aminoacyl-adenylate intermediate (His-AMP). In Pongo abelii (Sumatran orangutan), this protein is Histidine--tRNA ligase, mitochondrial (HARS2).